A 133-amino-acid polypeptide reads, in one-letter code: ATP synthase epsilon chain (133 aa).

This sequence belongs to the ATPase epsilon chain family. In terms of assembly, F-type ATPases have 2 components, CF(1) - the catalytic core - and CF(0) - the membrane proton channel. CF(1) has five subunits: alpha(3), beta(3), gamma(1), delta(1), epsilon(1). CF(0) has three main subunits: a, b and c.

The protein resides in the cell membrane. Functionally, produces ATP from ADP in the presence of a proton gradient across the membrane. This Alkalihalophilus pseudofirmus (strain ATCC BAA-2126 / JCM 17055 / OF4) (Bacillus pseudofirmus) protein is ATP synthase epsilon chain (atpC).